Consider the following 215-residue polypeptide: NAD(P)H-quinone oxidoreductase subunit I (215 aa).

4Fe-4S ferredoxin-type domains lie at 55-84 and 95-124; these read GRIH…VDWV and RNYS…MTEE. [4Fe-4S] cluster is bound by residues cysteine 64, cysteine 67, cysteine 70, cysteine 74, cysteine 104, cysteine 107, cysteine 110, and cysteine 114. Residues 166–215 are disordered; the sequence is AGEMDPHGVPNDRPRAGQLPSQVLETLAPPAKVGAKNEGQSTGTTQEGEA. Basic and acidic residues predominate over residues 169–180; it reads MDPHGVPNDRPR. The span at 203–215 shows a compositional bias: polar residues; the sequence is EGQSTGTTQEGEA.

Belongs to the complex I 23 kDa subunit family. As to quaternary structure, NDH-1 is composed of at least 11 different subunits. The cofactor is [4Fe-4S] cluster.

The protein localises to the cellular thylakoid membrane. The catalysed reaction is a plastoquinone + NADH + (n+1) H(+)(in) = a plastoquinol + NAD(+) + n H(+)(out). It catalyses the reaction a plastoquinone + NADPH + (n+1) H(+)(in) = a plastoquinol + NADP(+) + n H(+)(out). In terms of biological role, NDH-1 shuttles electrons from an unknown electron donor, via FMN and iron-sulfur (Fe-S) centers, to quinones in the respiratory and/or the photosynthetic chain. The immediate electron acceptor for the enzyme in this species is believed to be plastoquinone. Couples the redox reaction to proton translocation, and thus conserves the redox energy in a proton gradient. The polypeptide is NAD(P)H-quinone oxidoreductase subunit I (Parasynechococcus marenigrum (strain WH8102)).